The following is a 298-amino-acid chain: tRNA uridine(34) hydroxylase (298 aa).

One can recognise a Rhodanese domain in the interval 123 to 217 (QNPDVTLVDT…YLEEIPVAES (95 aa)). The Cysteine persulfide intermediate role is filled by Cys-177.

It belongs to the TrhO family.

The enzyme catalyses uridine(34) in tRNA + AH2 + O2 = 5-hydroxyuridine(34) in tRNA + A + H2O. Its function is as follows. Catalyzes oxygen-dependent 5-hydroxyuridine (ho5U) modification at position 34 in tRNAs. In Picosynechococcus sp. (strain ATCC 27264 / PCC 7002 / PR-6) (Agmenellum quadruplicatum), this protein is tRNA uridine(34) hydroxylase.